A 402-amino-acid chain; its full sequence is Choline dehydrogenase (402 aa).

This sequence belongs to the iron-containing alcohol dehydrogenase family.

It catalyses the reaction choline + NAD(+) = betaine aldehyde + NADH + H(+). It participates in amine and polyamine biosynthesis; betaine biosynthesis via choline pathway; betaine aldehyde from choline (dehydrogenase route): step 1/1. Involved in the biosynthesis of the osmoprotectant glycine betaine from choline. This Bacillus subtilis (strain 168) protein is Choline dehydrogenase.